A 447-amino-acid polypeptide reads, in one-letter code: Phosphoglucosamine mutase (447 aa).

Ser103 functions as the Phosphoserine intermediate in the catalytic mechanism. 4 residues coordinate Mg(2+): Ser103, Asp242, Asp244, and Asp246. Ser103 is subject to Phosphoserine.

It belongs to the phosphohexose mutase family. Mg(2+) is required as a cofactor. In terms of processing, activated by phosphorylation.

It catalyses the reaction alpha-D-glucosamine 1-phosphate = D-glucosamine 6-phosphate. In terms of biological role, catalyzes the conversion of glucosamine-6-phosphate to glucosamine-1-phosphate. This Paracoccus denitrificans (strain Pd 1222) protein is Phosphoglucosamine mutase.